The following is a 317-amino-acid chain: Porphobilinogen deaminase (317 aa).

S-(dipyrrolylmethanemethyl)cysteine is present on C245.

Belongs to the HMBS family. As to quaternary structure, monomer. Requires dipyrromethane as cofactor.

It catalyses the reaction 4 porphobilinogen + H2O = hydroxymethylbilane + 4 NH4(+). The protein operates within porphyrin-containing compound metabolism; protoporphyrin-IX biosynthesis; coproporphyrinogen-III from 5-aminolevulinate: step 2/4. It participates in porphyrin-containing compound metabolism; chlorophyll biosynthesis. Its function is as follows. Tetrapolymerization of the monopyrrole PBG into the hydroxymethylbilane pre-uroporphyrinogen in several discrete steps. The protein is Porphobilinogen deaminase of Parasynechococcus marenigrum (strain WH8102).